Reading from the N-terminus, the 404-residue chain is Pyrophosphate--fructose 6-phosphate 1-phosphotransferase (404 aa).

G12 is a binding site for diphosphate. D121 provides a ligand contact to Mg(2+). Substrate-binding positions include 149–151 (TID), 194–196 (MGR), E266, and 323–326 (YFSR). The active-site Proton acceptor is D151.

Belongs to the phosphofructokinase type A (PFKA) family. PPi-dependent PFK group II subfamily. Clade 'P' sub-subfamily. In terms of assembly, homodimer. Mg(2+) is required as a cofactor.

It is found in the cytoplasm. It carries out the reaction beta-D-fructose 6-phosphate + diphosphate = beta-D-fructose 1,6-bisphosphate + phosphate + H(+). Its pathway is carbohydrate degradation; glycolysis; D-glyceraldehyde 3-phosphate and glycerone phosphate from D-glucose: step 3/4. Non-allosteric. In terms of biological role, catalyzes the phosphorylation of D-fructose 6-phosphate, the first committing step of glycolysis. Uses inorganic phosphate (PPi) as phosphoryl donor instead of ATP like common ATP-dependent phosphofructokinases (ATP-PFKs), which renders the reaction reversible, and can thus function both in glycolysis and gluconeogenesis. Consistently, PPi-PFK can replace the enzymes of both the forward (ATP-PFK) and reverse (fructose-bisphosphatase (FBPase)) reactions. This chain is Pyrophosphate--fructose 6-phosphate 1-phosphotransferase, found in Propionibacterium freudenreichii subsp. shermanii (strain ATCC 9614 / DSM 4902 / CIP 103027 / NCIMB 8099 / CIRM-BIA1).